The primary structure comprises 419 residues: Synaptotagmin-1 (419 aa).

Residues 1 to 57 (MVSESHHEALAAPPVTTVATVLPSNATEPASPGEGKEDAFSKLKEKFMNELHKIPLP) lie on the Vesicular side of the membrane. Asparagine 25 carries an N-linked (GlcNAc...) asparagine glycan. The helical transmembrane segment at 58 to 80 (PWALIAIAIVAVLLVLTCCFCIC) threads the bilayer. 5 S-palmitoyl cysteine lipidation sites follow: cysteine 75, cysteine 76, cysteine 78, cysteine 80, and cysteine 83. The Cytoplasmic portion of the chain corresponds to 81 to 419 (KKCLFKKKNK…EVDAMLAVKK (339 aa)). The interval 108–139 (KDLGKTMKDQDDDAETGLTDGEEKEEPKEEEK) is disordered. Residues 117 to 131 (QDDDAETGLTDGEEK) show a composition bias toward acidic residues. Threonine 126 is modified (phosphothreonine). The phospholipid binding stretch occupies residues 133–379 (EPKEEEKLGK…AIGKVFVGYN (247 aa)). A C2 1 domain is found at 139 to 258 (KLGKLQYSLD…DFGHVTEEWR (120 aa)). Positions 169, 170, and 176 each coordinate Ca(2+). The residue at position 227 (tyrosine 227) is a Phosphotyrosine. Ca(2+)-binding residues include aspartate 228, phenylalanine 229, aspartate 230, serine 233, lysine 234, and aspartate 236. At serine 262 the chain carries Phosphoserine. Residues 270 to 403 (KLGDICFSLR…NPRRPIAQWH (134 aa)) enclose the C2 2 domain. Positions 301 and 307 each coordinate Ca(2+). Phosphoserine occurs at positions 340 and 342. Ca(2+) is bound by residues aspartate 361, aspartate 363, and aspartate 369.

Belongs to the synaptotagmin family. In terms of assembly, homotetramer. Heterodimer; heterodimerizes with SYT2 in presence of calcium. Interacts with SCAMP5. Interacts with STON2. Forms a complex with SV2B, syntaxin 1 and SNAP25. Interacts with SV2A, SV2B and SV2C. Interacts with RIMS1. Interacts with PRRT2. Interacts with DNAJC5 in a phosphorylation-dependent manner. Interacts (via N-terminus) with RAB3A. Interacts with SYT12. Interacts with calmodulin. Interacts with DNM1 (via C-terminal proline-rich domain (PRD)); this interaction facilitates vesicle fission during clathrin-mediated endocytosis (CME). It depends on Ca(2+) as a cofactor. Post-translationally, glycosylated.

Its subcellular location is the cytoplasmic vesicle. It is found in the secretory vesicle membrane. It localises to the secretory vesicle. The protein resides in the synaptic vesicle membrane. The protein localises to the chromaffin granule membrane. Its subcellular location is the cytoplasm. In terms of biological role, calcium sensor that participates in triggering neurotransmitter release at the synapse. May have a regulatory role in the membrane interactions during trafficking of synaptic vesicles at the active zone of the synapse. It binds acidic phospholipids with a specificity that requires the presence of both an acidic head group and a diacyl backbone. A Ca(2+)-dependent interaction between synaptotagmin and putative receptors for activated protein kinase C has also been reported. It can bind to at least three additional proteins in a Ca(2+)-independent manner; these are neurexins, syntaxin and AP2. Plays a role in dendrite formation by melanocytes. This is Synaptotagmin-1 from Macaca fascicularis (Crab-eating macaque).